A 506-amino-acid chain; its full sequence is Maturase K (506 aa).

The protein belongs to the intron maturase 2 family. MatK subfamily.

It localises to the plastid. The protein localises to the chloroplast. Functionally, usually encoded in the trnK tRNA gene intron. Probably assists in splicing its own and other chloroplast group II introns. The sequence is that of Maturase K from Trifolium gracilentum (Pinpoint clover).